A 183-amino-acid chain; its full sequence is Translation initiation factor IF-3 (183 aa).

The span at 1 to 13 shows a compositional bias: polar residues; it reads MKQPDRNQQQGAK. The tract at residues 1–24 is disordered; it reads MKQPDRNQQQGAKSNRPAINDEIR.

It belongs to the IF-3 family. As to quaternary structure, monomer.

It localises to the cytoplasm. Functionally, IF-3 binds to the 30S ribosomal subunit and shifts the equilibrium between 70S ribosomes and their 50S and 30S subunits in favor of the free subunits, thus enhancing the availability of 30S subunits on which protein synthesis initiation begins. This chain is Translation initiation factor IF-3, found in Acinetobacter baylyi (strain ATCC 33305 / BD413 / ADP1).